The sequence spans 1527 residues: MAKSPRSVVTTGTKRRRAKVHKEDEPVENENLESEFDVSKKESNGATEPGNEPVASKRPKRAAACSNFKEKSLDLSEKDSIITIKESRVEEKEIEAVNLTRTGPEDGQPCRKIIDFILHDGDGNLQPFEMSEVDDIFITALIMPLDDDLEKDRGKGICCSGFGRIENWAISGYDEGAAVIWVSTETSDYKCVKPASSYRSYFEHFSEKARVCVEVYKKLARSVGGNPQVDLEELIAGVVRSINSNRSFNGTVTKDFVISSGEFIYKQLIGLDHTAGNDDEMLATLPVLVALKDECKSRAGFTHLPAMPSNGTLRIKDGQDKGLTEDEDAKLARLLQEEEEWKMMKQRGKRGTSQKNIYIKICETEIANDYPLPAYYKPYNQEMDEYIFDSDIGMYSDDVPVRILDNWALYNSDSRLISLELIPMKAGAENDIVVFGSGFMREDDGSCCSTAELAQLHSSSSKSGREDPGVPIYLSPIKEWVVEFGGSMICITIRTDVAWYKLRQPTKQYAPWCEPVLKTARLAVSIITLLKEQSRASKLSFAEVIKKVAEFDSRHPAFISSKAPTVERYVVVHGQIILQQFADFPDESVKRCAFITGLLAKMEESRHTKLAIKKKSQQMRGENLNPSAKMGPILRKKLMRATTTMLISKIWGEYYATYFPGDTKEEDQNEPKEIDDDQEENEDNDAEEEVNVQDEKATRTPPSTRSRKSSADTRKEIKWEGQTAGKTVSGEVLYKCVIVQDLSISVGATVTTEDDSGETIMCFVEYMYEKLDGKNMIHGIILQEGSQTVLGNAANDREVFLTNDCLEFEASDIKELVTVNIQSLPWGHKYRKENSEAKRIEKAKAEERKRKGLPVEYICKSLYWPEKGGFFSLPYDKIGNGTGICSSCERKPVGNEFKLLSESSFVFENITYNIHDFLYIRPEFFSQGEGHETYKAGRNVGLKPYAVCHLLSVHGPAGSRKANPESTKVKVRRFYRPDDISSTKAYSSDIREVYYSEDIISVPVVMIEGKCEVRLKDDLPNSDLPAVVEHVFCCEYLYDPANGALKQLPPNVRLVTLTRKVPASKKNKGKQICDIELGGSDKPKDGQSENCLATLDIFAGCGGLSEGLQRSGLSLTKWAIEYEEPAGDAFGENHPEAAVFVENCNVILKAIMDKCGDSDDCISTSEAAERAAKLSEDKIKNLPVPGEVEFINGGPPCQGFSGMNRFNQSPWSKVQCEMILAFLSFAEYFRPRFFLLENVRNFVSFNKGQTFRLTLASLLEMGYQVRFGILEAGAYGVAQSRKRAFIWAAAPGETLPEWPEPMHVFASPELKITLPDGKFYAAVKSTAAGAPFRSITVRDTIGDLPAVENGAGKPTIQYGSGPVSWFQKKIRSDMASLNDHISKEMNELNLIRCKHIPKRPGCDWHDLPDEKVKLSTGQMVDLIPWCLPNTAKRHNQWKGLYGRLDWEGNFPTSVTDPQPMGKVGMCFHPEQDRIITVRECARSQGFPDSYRFAGNIQNKHRQIGNAVPPPLAYALGRKLKQAIDAKR.

Disordered stretches follow at residues 1 to 62 and 661 to 718; these read MAKS…PKRA and GDTK…KEIK. Acidic residues-rich tracts occupy residues 25-36 and 664-692; these read EPVENENLESEF and KEED…EVNV. A compositionally biased stretch (basic and acidic residues) spans 709 to 718; the sequence is SSADTRKEIK. BAH domains lie at 742–874 and 910–1049; these read LSIS…FSLP and ITYN…KQLP. The region spanning 1092–1526 is the SAM-dependent MTase C5-type domain; that stretch reads LATLDIFAGC…RKLKQAIDAK (435 aa). The active site involves C1197.

This sequence belongs to the class I-like SAM-binding methyltransferase superfamily. C5-methyltransferase family. As to expression, expressed in roots and inflorescences. Expressed in roots, panicles, anthers, pistils, endosperm and imbibed embryos. Expressed in tissues containing actively replicating and dividing cells, such as shoot and root meristems.

The protein resides in the nucleus. It catalyses the reaction a 2'-deoxycytidine in DNA + S-adenosyl-L-methionine = a 5-methyl-2'-deoxycytidine in DNA + S-adenosyl-L-homocysteine + H(+). In terms of biological role, probably methylates CpG residues and maintains DNA methylation. May be involved in methylation-dependent gene silencing. May play a minor role in the maintenance of DNA methylation. The sequence is that of DNA (cytosine-5)-methyltransferase 1A from Oryza sativa subsp. japonica (Rice).